We begin with the raw amino-acid sequence, 403 residues long: Tyrosine--tRNA ligase (403 aa).

The short motif at 42 to 51 (PTAPDLHLGH) is the 'HIGH' region element. Residues 226 to 230 (KMSKS) carry the 'KMSKS' region motif. Lysine 229 provides a ligand contact to ATP. Residues 339-400 (LRIASLLTAA…GKRNFARVAL (62 aa)) enclose the S4 RNA-binding domain.

This sequence belongs to the class-I aminoacyl-tRNA synthetase family. TyrS type 2 subfamily. As to quaternary structure, homodimer.

The protein resides in the cytoplasm. The enzyme catalyses tRNA(Tyr) + L-tyrosine + ATP = L-tyrosyl-tRNA(Tyr) + AMP + diphosphate + H(+). In terms of biological role, catalyzes the attachment of tyrosine to tRNA(Tyr) in a two-step reaction: tyrosine is first activated by ATP to form Tyr-AMP and then transferred to the acceptor end of tRNA(Tyr). The polypeptide is Tyrosine--tRNA ligase (Xanthomonas campestris pv. campestris (strain ATCC 33913 / DSM 3586 / NCPPB 528 / LMG 568 / P 25)).